Here is a 438-residue protein sequence, read N- to C-terminus: GTPase Der (438 aa).

EngA-type G domains are found at residues 4 to 168 (PLVT…KSEG) and 177 to 352 (IKIA…DNYS). Residues 10–17 (GRPNVGKS), 57–61 (DTGGI), 120–123 (NKID), 183–190 (GKPNVGKS), 230–234 (DTAGL), and 295–298 (NKWD) contribute to the GTP site. A KH-like domain is found at 353 to 437 (KRIATGVLND…GIKMIFKERK (85 aa)).

The protein belongs to the TRAFAC class TrmE-Era-EngA-EngB-Septin-like GTPase superfamily. EngA (Der) GTPase family. As to quaternary structure, associates with the 50S ribosomal subunit.

In terms of biological role, GTPase that plays an essential role in the late steps of ribosome biogenesis. The protein is GTPase Der of Clostridium acetobutylicum (strain ATCC 824 / DSM 792 / JCM 1419 / IAM 19013 / LMG 5710 / NBRC 13948 / NRRL B-527 / VKM B-1787 / 2291 / W).